Reading from the N-terminus, the 383-residue chain is Succinyl-diaminopimelate desuccinylase (383 aa).

Zn(2+) is bound at residue His79. Residue Asp81 is part of the active site. Residue Asp110 participates in Zn(2+) binding. Residue Glu141 is the Proton acceptor of the active site. 3 residues coordinate Zn(2+): Glu142, Glu170, and His355.

Belongs to the peptidase M20A family. DapE subfamily. In terms of assembly, homodimer. Zn(2+) serves as cofactor. It depends on Co(2+) as a cofactor.

It catalyses the reaction N-succinyl-(2S,6S)-2,6-diaminopimelate + H2O = (2S,6S)-2,6-diaminopimelate + succinate. It functions in the pathway amino-acid biosynthesis; L-lysine biosynthesis via DAP pathway; LL-2,6-diaminopimelate from (S)-tetrahydrodipicolinate (succinylase route): step 3/3. Its function is as follows. Catalyzes the hydrolysis of N-succinyl-L,L-diaminopimelic acid (SDAP), forming succinate and LL-2,6-diaminopimelate (DAP), an intermediate involved in the bacterial biosynthesis of lysine and meso-diaminopimelic acid, an essential component of bacterial cell walls. The sequence is that of Succinyl-diaminopimelate desuccinylase from Helicobacter pylori (strain ATCC 700392 / 26695) (Campylobacter pylori).